The chain runs to 1033 residues: SIT4-associating protein SAP190 (1033 aa).

Disordered regions lie at residues 32-82 (DQDD…TTES), 147-213 (PEII…QVET), 768-813 (FGND…HDSG), and 828-1033 (ENEE…KEAF). Over residues 158–170 (ILIERDRKDKKED) the composition is skewed to basic and acidic residues. Positions 171–182 (AEEGGDSEETTN) are enriched in acidic residues. The span at 183–195 (DSDHDSGDERSVD) shows a compositional bias: basic and acidic residues. The residue at position 774 (serine 774) is a Phosphoserine. Acidic residues-rich tracts occupy residues 784 to 793 (SEDIIGDTEG) and 828 to 838 (ENEEDYAEYSD). 3 positions are modified to phosphoserine: serine 857, serine 862, and serine 892. Residues 858-879 (DDGKSKSAESEFTDKISEHRDG) show a composition bias toward basic and acidic residues. Residues 909–924 (SRSQPSDPKLQDQNIF) show a composition bias toward polar residues. Over residues 932-944 (GVGDDDDYMDPND) the composition is skewed to acidic residues. At threonine 990 the chain carries Phosphothreonine. Serine 991 is subject to Phosphoserine. A compositionally biased stretch (acidic residues) spans 1000-1018 (ISSDEEDSEDEDEENDMGN).

It belongs to the SAPS family. Associates with the SIT4 protein phosphatase catalytic subunit in a cell-cycle-dependent manner. Hyperphosphorylated in the absence of SIT4.

The protein localises to the cytoplasm. Positive regulator of protein phosphatase SIT4. Involved in the general amino acid control (GAAC) response regulated by TOR. Involved in the dephosphorylation of the elongator complex subunit IKI3. This Saccharomyces cerevisiae (strain Lalvin EC1118 / Prise de mousse) (Baker's yeast) protein is SIT4-associating protein SAP190 (SAP190).